The primary structure comprises 947 residues: Bifunctional glutamine synthetase adenylyltransferase/adenylyl-removing enzyme (947 aa).

The interval 1–443 (MQLPSSLVSV…VFETLIGDDE (443 aa)) is adenylyl removase. The tract at residues 451-947 (ARHFHELWDM…VKQAWNQWFA (497 aa)) is adenylyl transferase.

The protein belongs to the GlnE family. The cofactor is Mg(2+).

It carries out the reaction [glutamine synthetase]-O(4)-(5'-adenylyl)-L-tyrosine + phosphate = [glutamine synthetase]-L-tyrosine + ADP. The catalysed reaction is [glutamine synthetase]-L-tyrosine + ATP = [glutamine synthetase]-O(4)-(5'-adenylyl)-L-tyrosine + diphosphate. In terms of biological role, involved in the regulation of glutamine synthetase GlnA, a key enzyme in the process to assimilate ammonia. When cellular nitrogen levels are high, the C-terminal adenylyl transferase (AT) inactivates GlnA by covalent transfer of an adenylyl group from ATP to specific tyrosine residue of GlnA, thus reducing its activity. Conversely, when nitrogen levels are low, the N-terminal adenylyl removase (AR) activates GlnA by removing the adenylyl group by phosphorolysis, increasing its activity. The regulatory region of GlnE binds the signal transduction protein PII (GlnB) which indicates the nitrogen status of the cell. The polypeptide is Bifunctional glutamine synthetase adenylyltransferase/adenylyl-removing enzyme (Vibrio parahaemolyticus serotype O3:K6 (strain RIMD 2210633)).